The chain runs to 427 residues: Adenylosuccinate synthetase (427 aa).

GTP is bound by residues 12 to 18 (GDEGKGK) and 40 to 42 (GHT). The Proton acceptor role is filled by D13. Residues D13 and G40 each contribute to the Mg(2+) site. Residues 13 to 16 (DEGK), 38 to 41 (NAGH), T128, R142, Q223, T238, and R302 each bind IMP. The active-site Proton donor is H41. 298–304 (TVTGRAR) serves as a coordination point for substrate. Residues R304, 330 to 332 (RLD), and 412 to 414 (SVG) contribute to the GTP site.

The protein belongs to the adenylosuccinate synthetase family. As to quaternary structure, homodimer. Mg(2+) serves as cofactor.

It localises to the cytoplasm. The catalysed reaction is IMP + L-aspartate + GTP = N(6)-(1,2-dicarboxyethyl)-AMP + GDP + phosphate + 2 H(+). It participates in purine metabolism; AMP biosynthesis via de novo pathway; AMP from IMP: step 1/2. Its function is as follows. Plays an important role in the de novo pathway of purine nucleotide biosynthesis. Catalyzes the first committed step in the biosynthesis of AMP from IMP. The sequence is that of Adenylosuccinate synthetase from Brachyspira hyodysenteriae (strain ATCC 49526 / WA1).